The primary structure comprises 497 residues: uncharacterized protein (497 aa).

11 helical membrane-spanning segments follow: residues 91–111, 119–139, 149–169, 179–199, 215–235, 283–303, 319–339, 347–367, 374–394, 406–426, and 439–459; these read WVGT…STLL, VTSA…LVHS, LLGI…AQWY, AFLV…SYGL, ILFI…FIHI, MYLY…LSNF, LLMN…FGLI, MDIA…IAFA, LAGY…LSCI, FMSA…PQTF, and VSFV…YAVN.

The protein belongs to the major facilitator superfamily. Allantoate permease family.

The protein localises to the golgi apparatus. The protein resides in the membrane. This is an uncharacterized protein from Schizosaccharomyces pombe (strain 972 / ATCC 24843) (Fission yeast).